Consider the following 288-residue polypeptide: Polyamine aminopropyltransferase (288 aa).

In terms of domain architecture, PABS spans isoleucine 11–lysine 245. Glutamine 36 serves as a coordination point for S-methyl-5'-thioadenosine. Residues histidine 67 and aspartate 91 each contribute to the spermidine site. Residues glutamate 111 and aspartate 148–glycine 149 contribute to the S-methyl-5'-thioadenosine site. Aspartate 166 functions as the Proton acceptor in the catalytic mechanism. Aspartate 166–aspartate 169 is a spermidine binding site. Proline 173 contacts S-methyl-5'-thioadenosine.

This sequence belongs to the spermidine/spermine synthase family. In terms of assembly, homodimer or homotetramer.

It localises to the cytoplasm. It carries out the reaction S-adenosyl 3-(methylsulfanyl)propylamine + agmatine = N(1)-(3-aminopropyl)agmatine + S-methyl-5'-thioadenosine + H(+). The catalysed reaction is S-adenosyl 3-(methylsulfanyl)propylamine + putrescine = S-methyl-5'-thioadenosine + spermidine + H(+). It catalyses the reaction cadaverine + S-adenosyl 3-(methylsulfanyl)propylamine = aminopropylcadaverine + S-methyl-5'-thioadenosine + H(+). It participates in amine and polyamine biosynthesis; spermidine biosynthesis; spermidine from putrescine: step 1/1. Functionally, involved in the biosynthesis of polyamines which are thought to support the growth of thermophilic microorganisms under high-temperature conditions. It seems that long-chain and branched-chain of polyamines effectively stabilize DNA and RNA, respectively. Catalyzes the irreversible transfer of a propylamine group from the amino donor S-adenosylmethioninamine (decarboxy-AdoMet) to agmatine to yield N1-aminopropylagmatine. It can also use cadaverine (1,5-diaminopentane) and putrescine (1,4-diaminobutane) as substrate with a lower activity than that of agmatine. The reaction involves a nucleophilic attack on the C-3 methylene of the propylamine moiety adjacent to the positively charged sulfur of decarboxy-AdoMet. This Thermococcus kodakarensis (strain ATCC BAA-918 / JCM 12380 / KOD1) (Pyrococcus kodakaraensis (strain KOD1)) protein is Polyamine aminopropyltransferase.